The chain runs to 776 residues: MAEPRQEFDVMEDHAGTYGLGDRKDQGGYTMLQDQEGDTDAGLKESPLQTPAEDGSEEPGSETSDAKSTPTAEDVTAPLVDEGAPXKQAAAQPHTEIPEGTTAEEAGIGDTPSLEDEAAGHVTQEPESGKVVREGFLGEPGPRSXSHQLASGMPGAPLLPEGPREATRQPSGTGPEDTEGGRHAPELLKHQLLGDLHQEGPPLKRAGGKERPGIKEEVDEDRDVDESSPQDSPPSKVSPAHDGRPPQTAAREATSIPGFPAEGAIPLPVDFLSKVSTEIPASEPDGPSAGRAEGQDAPPEFTFHVEITPNVQKEQAHSEEHLGRAAFPGAPGEGPEAQGPSLGEDTKEADLPEPSEKQPAAAPRGKPISRVPQLKARMVSKSKDGTGSDDKKAKTSTRSSAKTLKNRPCLSPKHPTPGSSDPLIQPSSPAVCPEPPSSPKYVSSVTXRTGSSGAKEMKLKGADGKTKIATPRGAAPPGQKGQANATRIPAKTPPAPKTPPSSVTKQVQRRPPPAGPKSERGEPPKSGDRSGYSSPGSPGTPGSRSRTPSLPTPPTREPKKVAVVRTPPKSPSSAKSRLQTAPVPMPDLKNVKSKIGSTENLKHQPGGGKVQIINKKLDLSNVQSKCGSKDNIKHVPGGGSVQIVYKPVDLSKVTSKCGSLGNIHHKPGGGQVEVKSEKLDFKDRVQSKIGSLDNITHVPGGGNKKIETHKLTFRENAKAKTDHGAEIVYKSPVVSGDTSPRHLSNVSSTGSIDMVDSPQLATLADEVSASLAKQGL.

Residues 1 to 26 (MAEPRQEFDVMEDHAGTYGLGDRKDQ) show a composition bias toward basic and acidic residues. Residues 1–591 (MAEPRQEFDV…PVPMPDLKNV (591 aa)) form a disordered region. Residue Ala-2 is modified to N-acetylalanine. Residues Tyr-18 and Tyr-29 each carry the phosphotyrosine modification. Residue Lys-44 forms a Glycyl lysine isopeptide (Lys-Gly) (interchain with G-Cter in ubiquitin) linkage. Phosphoserine occurs at positions 46 and 61. The segment covering 61 to 71 (SETSDAKSTPT) has biased composition (polar residues). A phosphothreonine mark is found at Thr-69, Thr-71, and Thr-111. Composition is skewed to basic and acidic residues over residues 179–189 (EGGRHAPELLK) and 207–216 (GGKERPGIKE). A compositionally biased stretch (acidic residues) spans 217–228 (EVDEDRDVDESS). Positions 314–323 (EQAHSEEHLG) are enriched in basic and acidic residues. Low complexity predominate over residues 325 to 340 (AAFPGAPGEGPEAQGP). 2 stretches are compositionally biased toward basic and acidic residues: residues 344-356 (EDTKEADLPEPSE) and 381-393 (KSKDGTGSDDKKA). Over residues 442–453 (VSSVTXRTGSSG) the composition is skewed to low complexity. Positions 455–466 (KEMKLKGADGKT) are enriched in basic and acidic residues. Thr-470 bears the Phosphothreonine mark. Arg-472 is modified (omega-N-methylarginine). Lys-480 carries the N6,N6-dimethyllysine; alternate modification. Lys-480 is subject to N6-acetyllysine; alternate. Phosphothreonine is present on residues Thr-486, Thr-492, and Thr-498. A phosphoserine mark is found at Ser-502, Ser-526, and Ser-530. The span at 517–528 (KSERGEPPKSGD) shows a compositional bias: basic and acidic residues. The segment covering 529 to 549 (RSGYSSPGSPGTPGSRSRTPS) has biased composition (low complexity). Tyr-532 carries the post-translational modification Phosphotyrosine. A phosphoserine mark is found at Ser-533, Ser-534, and Ser-537. Residues Thr-540 and Thr-547 each carry the phosphothreonine modification. A Phosphoserine modification is found at Ser-549. A Phosphothreonine modification is found at Thr-552. Lys-560 is modified (N6-acetyllysine). Residue Thr-566 is modified to Phosphothreonine. A phosphoserine mark is found at Ser-570 and Ser-572. Tau/MAP repeat units lie at residues 579-609 (QTAPVPMPDLKNVKSKIGSTENLKHQPGGGK), 610-640 (VQIINKKLDLSNVQSKCGSKDNIKHVPGGGS), 641-671 (VQIVYKPVDLSKVTSKCGSLGNIHHKPGGGQ), and 672-703 (VEVKSEKLDFKDRVQSKIGSLDNITHVPGGGN). A Glycyl lysine isopeptide (Lys-Gly) (interchain with G-Cter in ubiquitin) cross-link involves residue Lys-589. Position 594 is an N6-acetyllysine; alternate (Lys-594). Lys-594 is modified (N6-methyllysine; alternate). Lys-594 participates in a covalent cross-link: Glycyl lysine isopeptide (Lys-Gly) (interchain with G-Cter in ubiquitin); alternate. Residue Ser-597 is modified to Phosphoserine. Lys-602 participates in a covalent cross-link: Glycyl lysine isopeptide (Lys-Gly) (interchain with G-Cter in ubiquitin). An N6-acetyllysine; alternate modification is found at Lys-616. Residue Lys-616 forms a Glycyl lysine isopeptide (Lys-Gly) (interchain with G-Cter in ubiquitin); alternate linkage. Phosphoserine occurs at positions 620 and 624. Lys-625 is modified (N6-acetyllysine). Position 628 is a phosphoserine (Ser-628). The residue at position 633 (Lys-633) is an N6-acetyllysine; alternate. Lys-633 participates in a covalent cross-link: Glycyl lysine isopeptide (Lys-Gly) (interchain with G-Cter in ubiquitin); alternate. A Phosphoserine modification is found at Ser-640. An N6,N6-dimethyllysine; alternate modification is found at Lys-646. Lys-646, Lys-652, and Lys-656 each carry N6-acetyllysine; alternate. Residues Lys-646, Lys-652, and Lys-656 each participate in a glycyl lysine isopeptide (Lys-Gly) (interchain with G-Cter in ubiquitin); alternate cross-link. The residue at position 659 (Ser-659) is a Phosphoserine. Lys-666, Lys-678, and Lys-682 each carry N6-acetyllysine; alternate. Residues Lys-666, Lys-678, and Lys-682 each participate in a glycyl lysine isopeptide (Lys-Gly) (interchain with G-Cter in ubiquitin); alternate cross-link. An Omega-N-methylarginine modification is found at Arg-684. Ser-687 is subject to Phosphoserine. A Glycyl lysine isopeptide (Lys-Gly) (interchain with G-Cter in ubiquitin) cross-link involves residue Lys-688. At Ser-691 the chain carries Phosphoserine. An N6-acetyllysine; alternate modification is found at Lys-704. Lys-704 participates in a covalent cross-link: Glycyl lysine isopeptide (Lys-Gly) (interchain with G-Cter in ubiquitin); alternate. Lys-710 participates in a covalent cross-link: Glycyl lysine isopeptide (Lys-Gly) (interchain with G-Cter in ubiquitin). An N6-acetyllysine; alternate modification is found at Lys-720. A Glycyl lysine isopeptide (Lys-Gly) (interchain with G-Cter in ubiquitin); alternate cross-link involves residue Lys-720. Phosphotyrosine is present on Tyr-729. Ser-731 and Ser-735 each carry phosphoserine. Residues 733–752 (VVSGDTSPRHLSNVSSTGSI) are disordered. A compositionally biased stretch (polar residues) spans 736–751 (GDTSPRHLSNVSSTGS). Thr-738 bears the Phosphothreonine mark. Residues Ser-739, Ser-744, Ser-751, and Ser-757 each carry the phosphoserine modification. The residue at position 762 (Thr-762) is a Phosphothreonine.

Interacts with MARK1, MARK2, MARK3 and MARK4. Interacts with SQSTM1 when polyubiquitinated. Interacts with PSMC2 through SQSTM1. Interacts with FKBP4. Binds to CSNK1D. Interacts with SGK1. Interacts with EPM2A; the interaction dephosphorylates MAPT at Ser-396. Interacts with PIN1. Interacts with LRRK2. Interacts with LRP1, leading to endocytosis; this interaction is reduced in the presence of LRPAP1/RAP. Polyubiquitinated. Requires functional TRAF6 and may provoke SQSTM1-dependent degradation by the proteasome. In terms of processing, phosphorylation at various serine and threonine residues in S-P or T-P motifs by proline-directed protein kinases (PDPK1, CDK1, CDK5, GSK3, MAPK) (a few sites per protein in interphase, more in mitosis), and at serine residues in K-X-G-S motifs by MAP/microtubule affinity-regulating kinase (MARK1, MARK2, MARK3 or MARK4), causing detachment from microtubules, and their disassembly. Phosphorylation at Ser-597 by BRSK1 and BRSK2 in neurons affects ability to bind microtubules and plays a role in neuron polarization. Phosphorylated by PHK. Dephosphorylation at several serine and threonine residues by the serine/threonine phosphatase PPP5C.

The protein resides in the cytoplasm. Its subcellular location is the cytosol. It is found in the cell membrane. It localises to the cytoskeleton. The protein localises to the cell projection. The protein resides in the axon. Its subcellular location is the dendrite. Its function is as follows. Promotes microtubule assembly and stability, and might be involved in the establishment and maintenance of neuronal polarity. The C-terminus binds axonal microtubules while the N-terminus binds neural plasma membrane components, suggesting that tau functions as a linker protein between both. Axonal polarity is predetermined by tau localization (in the neuronal cell) in the domain of the cell body defined by the centrosome. The short isoforms allow plasticity of the cytoskeleton whereas the longer isoforms may preferentially play a role in its stabilization. The sequence is that of Microtubule-associated protein tau (MAPT) from Hylobates lar (Lar gibbon).